The chain runs to 156 residues: 6,7-dimethyl-8-ribityllumazine synthase (156 aa).

5-amino-6-(D-ribitylamino)uracil-binding positions include Phe23, 57-59 (AYE), and 81-83 (AII). 86-87 (GT) provides a ligand contact to (2S)-2-hydroxy-3-oxobutyl phosphate. Residue His89 is the Proton donor of the active site. Phe114 contributes to the 5-amino-6-(D-ribitylamino)uracil binding site. Arg128 is a binding site for (2S)-2-hydroxy-3-oxobutyl phosphate.

The protein belongs to the DMRL synthase family.

It catalyses the reaction (2S)-2-hydroxy-3-oxobutyl phosphate + 5-amino-6-(D-ribitylamino)uracil = 6,7-dimethyl-8-(1-D-ribityl)lumazine + phosphate + 2 H2O + H(+). It functions in the pathway cofactor biosynthesis; riboflavin biosynthesis; riboflavin from 2-hydroxy-3-oxobutyl phosphate and 5-amino-6-(D-ribitylamino)uracil: step 1/2. In terms of biological role, catalyzes the formation of 6,7-dimethyl-8-ribityllumazine by condensation of 5-amino-6-(D-ribitylamino)uracil with 3,4-dihydroxy-2-butanone 4-phosphate. This is the penultimate step in the biosynthesis of riboflavin. This chain is 6,7-dimethyl-8-ribityllumazine synthase, found in Helicobacter pylori (strain J99 / ATCC 700824) (Campylobacter pylori J99).